The following is a 577-amino-acid chain: Zinc finger-containing ubiquitin peptidase 1 (577 aa).

A C2H2-type 1 zinc finger spans residues 2-24 (LSCNICGETVNSEPDMKAHLIVH). The segment at 29-52 (IICPFCKLSGINYNEICFHIETVH) adopts a C2H2-type 2; atypical zinc-finger fold. A compositionally biased stretch (basic and acidic residues) spans 124-137 (ESRKYQKSREKKPG). The interval 124-145 (ESRKYQKSREKKPGLSEAQGSI) is disordered. The C2H2-type 3; atypical zinc-finger motif lies at 153–176 (PECPFCGKIEGCSQDMEIHVKTKH). The C2H2-type 4 zinc finger occupies 192 to 214 (YDCPMCGLVCTNYHILQEHVDLH). Residues 225-247 (DRVQCSSDRELAHRLQQEEDRKR) are MIU. A disordered region spans residues 238-260 (RLQQEEDRKRKSEESRQEREEFQ). The segment at 248-273 (KSEESRQEREEFQKLQRQYGLDNSGG) is zUBD/ZHA. Residue Lys261 is modified to N6-acetyllysine. Cys359 serves as the catalytic Nucleophile. Catalysis depends on His490, which acts as the Proton acceptor. Asp511 is a catalytic residue.

It belongs to the peptidase C78 family. ZUFSP subfamily. In terms of assembly, interacts with RPA1 and RPA2.

The protein localises to the cytoplasm. It localises to the nucleus. The enzyme catalyses Thiol-dependent hydrolysis of ester, thioester, amide, peptide and isopeptide bonds formed by the C-terminal Gly of ubiquitin (a 76-residue protein attached to proteins as an intracellular targeting signal).. Deubiquitinase with endodeubiquitinase activity that specifically interacts with and cleaves 'Lys-63'-linked long polyubiquitin chains. Shows only weak activity against 'Lys-11' and 'Lys-48'-linked chains. Plays an important role in genome stability pathways, functioning to prevent spontaneous DNA damage and also promote cellular survival in response to exogenous DNA damage. Modulates the ubiquitination status of replication protein A (RPA) complex proteins in response to replication stress. This Mus musculus (Mouse) protein is Zinc finger-containing ubiquitin peptidase 1.